A 61-amino-acid polypeptide reads, in one-letter code: uncharacterized protein (61 aa).

The stretch at 10-61 (YEEENDNEDFEEEVELSREDLNQIINELAPFLIKLLTDLTELTQKKEESENE) forms a coiled coil.

This is an uncharacterized protein from Acidianus bottle-shaped virus (isolate Italy/Pozzuoli) (ABV).